A 364-amino-acid polypeptide reads, in one-letter code: tRNA (adenine(58)-N(1))-methyltransferase catalytic subunit trm61 (364 aa).

S-adenosyl-L-methionine-binding positions include 114-116 (SAS), glutamate 135, arginine 140, 167-168 (DV), and aspartate 186. The disordered stretch occupies residues 280-309 (EQNLSSDAKVEDQDNDSMLGENKSSVSTET).

It belongs to the class I-like SAM-binding methyltransferase superfamily. TRM61 family. In terms of assembly, heterotetramer; composed of two copies of TRM6 and two copies of TRM61.

Its subcellular location is the nucleus. It catalyses the reaction adenosine(58) in tRNA + S-adenosyl-L-methionine = N(1)-methyladenosine(58) in tRNA + S-adenosyl-L-homocysteine + H(+). Catalytic subunit of tRNA (adenine-N(1)-)-methyltransferase, which catalyzes the formation of N(1)-methyladenine at position 58 (m1A58) in initiator methionyl-tRNA. This Schizosaccharomyces pombe (strain 972 / ATCC 24843) (Fission yeast) protein is tRNA (adenine(58)-N(1))-methyltransferase catalytic subunit trm61 (cpd1).